We begin with the raw amino-acid sequence, 475 residues long: ATP synthase subunit beta (475 aa).

ATP is bound at residue 152 to 159 (GGAGVGKT).

It belongs to the ATPase alpha/beta chains family. In terms of assembly, F-type ATPases have 2 components, CF(1) - the catalytic core - and CF(0) - the membrane proton channel. CF(1) has five subunits: alpha(3), beta(3), gamma(1), delta(1), epsilon(1). CF(0) has four main subunits: a(1), b(1), b'(1) and c(9-12).

It localises to the cell inner membrane. The enzyme catalyses ATP + H2O + 4 H(+)(in) = ADP + phosphate + 5 H(+)(out). In terms of biological role, produces ATP from ADP in the presence of a proton gradient across the membrane. The catalytic sites are hosted primarily by the beta subunits. The chain is ATP synthase subunit beta from Cereibacter sphaeroides (strain ATCC 17025 / ATH 2.4.3) (Rhodobacter sphaeroides).